The following is a 292-amino-acid chain: Hydroxysqualene synthase (292 aa).

It belongs to the phytoene/squalene synthase family. HpnC subfamily.

It catalyses the reaction presqualene diphosphate + H2O = hydroxysqualene + diphosphate. The protein operates within secondary metabolite biosynthesis; hopanoid biosynthesis. Involved in the biosynthesis of the hopanoid precursor squalene (SQ) from farnesyl diphosphate (FPP). Catalyzes the second step, the conversion of presqualene diphosphate (PSPP) to hydroxysqualene (HSQ). This is Hydroxysqualene synthase from Sinorhizobium fredii (strain NBRC 101917 / NGR234).